The chain runs to 244 residues: DSLSYYHSPADSFSSMGSPVNTQDFCADLSVSSANFIPTETAISTSPDLQWLVQPTLVSSVAPSQTRAPHPYGLPTQSAGAYARAGMVKTVSGGRAQSIGRRGKVEQLSPEEEVKRRIRRERNKMAAAKCRNRRRELTDTLQAETDQLEDEKSALQTEIANLLKEKEKLEFILAAHRPACKIPDDLGFPEEMSVASLDLTGGLLPLLNDPEPKPSLEPVKSSFDDFLFPASSGHSGFISMAGWQ.

A transforming protein v-Fos region spans residues 1 to 236 (DSLSYYHSPA…LFPASSGHSG (236 aa)). Residues 113–176 (EVKRRIRRER…EKLEFILAAH (64 aa)) enclose the bZIP domain. The tract at residues 115-135 (KRRIRRERNKMAAAKCRNRRR) is basic motif. The segment at 141–169 (LQAETDQLEDEKSALQTEIANLLKEKEKL) is leucine-zipper. A transforming protein v-Fox region spans residues 237-244 (FISMAGWQ).

It belongs to the bZIP family. Fos subfamily.

Its subcellular location is the host nucleus. This chain is Transforming protein v-Fos/v-Fox (FOS-FOX), found in Mus musculus (Mouse).